The primary structure comprises 361 residues: D-alanine--D-alanine ligase (361 aa).

Residues 134–344 (KILAQRAGVP…YTDLITKLID (211 aa)) enclose the ATP-grasp domain. 169-224 (ASQLGSDLFVKPSNQGSSVGVSHVTNEKEYKVALAEAFKYDDKVLVEETVHGTEVE) is an ATP binding site. Asp-297, Glu-311, and Asn-313 together coordinate Mg(2+).

The protein belongs to the D-alanine--D-alanine ligase family. Mg(2+) is required as a cofactor. Mn(2+) serves as cofactor.

Its subcellular location is the cytoplasm. It catalyses the reaction 2 D-alanine + ATP = D-alanyl-D-alanine + ADP + phosphate + H(+). The protein operates within cell wall biogenesis; peptidoglycan biosynthesis. Functionally, cell wall formation. The chain is D-alanine--D-alanine ligase from Lactobacillus gasseri (strain ATCC 33323 / DSM 20243 / BCRC 14619 / CIP 102991 / JCM 1131 / KCTC 3163 / NCIMB 11718 / NCTC 13722 / AM63).